A 541-amino-acid polypeptide reads, in one-letter code: Arginine--tRNA ligase (541 aa).

The short motif at A123 to H133 is the 'HIGH' region element.

It belongs to the class-I aminoacyl-tRNA synthetase family. Monomer.

It localises to the cytoplasm. It catalyses the reaction tRNA(Arg) + L-arginine + ATP = L-arginyl-tRNA(Arg) + AMP + diphosphate. The sequence is that of Arginine--tRNA ligase from Metamycoplasma arthritidis (strain 158L3-1) (Mycoplasma arthritidis).